The sequence spans 205 residues: Variable small protein 11 (205 aa).

A signal peptide spans 1–18 (MRKRISAIIMTLFMVFMS). Cys-19 carries the N-palmitoyl cysteine lipid modification. Cys-19 carries S-diacylglycerol cysteine lipidation.

This sequence belongs to the variable small protein (Vsp) family.

The protein resides in the cell outer membrane. Functionally, the Vlp and Vsp proteins are antigenically distinct proteins, only one vlp or vsp gene is transcriptionally active at any one time. Switching between these genes is a mechanism of host immune response evasion. The chain is Variable small protein 11 from Borrelia hermsii.